The primary structure comprises 210 residues: Riboflavin kinase (210 aa).

Residues 1–81 (MECRERRLAA…DLLRYFNIAS (81 aa)) form an H-T-H motif-like region. Positions 82–210 (IRLVGRVVSG…GDVVEVEVLL (129 aa)) are riboflavin kinase. 91 to 96 (GLGEGA) contributes to the CDP binding site. Mg(2+) is bound by residues Thr-120 and Asn-122. Thr-177 and Glu-185 together coordinate FMN. 190–193 (VKLR) provides a ligand contact to CDP.

Belongs to the archaeal riboflavin kinase family. Mg(2+) serves as cofactor.

The enzyme catalyses riboflavin + CTP = CDP + FMN + H(+). The protein operates within cofactor biosynthesis; FMN biosynthesis; FMN from riboflavin (CTP route): step 1/1. Functionally, catalyzes the CTP-dependent phosphorylation of riboflavin (vitamin B2) to form flavin mononucleotide (FMN). This Pyrobaculum arsenaticum (strain DSM 13514 / JCM 11321 / PZ6) protein is Riboflavin kinase (ribK).